A 190-amino-acid chain; its full sequence is UPF0232 protein SCO3875 (190 aa).

Disordered stretches follow at residues 1-70 and 163-190; these read MSAD…GRDP and GPGG…DTYG. Residues 26 to 35 show a composition bias toward low complexity; sequence GVDLARVALR. Residues 36-45 show a composition bias toward basic and acidic residues; sequence AAREAARARG. Gly residues predominate over residues 163 to 172; the sequence is GPGGPGGPGR.

It belongs to the UPF0232 family.

In Streptomyces coelicolor (strain ATCC BAA-471 / A3(2) / M145), this protein is UPF0232 protein SCO3875.